Here is a 432-residue protein sequence, read N- to C-terminus: 3-phosphoshikimate 1-carboxyvinyltransferase (432 aa).

The 3-phosphoshikimate site is built by K23, S24, and R28. Residue K23 coordinates phosphoenolpyruvate. Residues G95 and R123 each coordinate phosphoenolpyruvate. 3-phosphoshikimate is bound by residues S166, Q168, D315, and K342. Phosphoenolpyruvate is bound at residue Q168. The Proton acceptor role is filled by D315. Residues R346 and R390 each contribute to the phosphoenolpyruvate site.

The protein belongs to the EPSP synthase family. Monomer.

Its subcellular location is the cytoplasm. It carries out the reaction 3-phosphoshikimate + phosphoenolpyruvate = 5-O-(1-carboxyvinyl)-3-phosphoshikimate + phosphate. The protein operates within metabolic intermediate biosynthesis; chorismate biosynthesis; chorismate from D-erythrose 4-phosphate and phosphoenolpyruvate: step 6/7. In terms of biological role, catalyzes the transfer of the enolpyruvyl moiety of phosphoenolpyruvate (PEP) to the 5-hydroxyl of shikimate-3-phosphate (S3P) to produce enolpyruvyl shikimate-3-phosphate and inorganic phosphate. The protein is 3-phosphoshikimate 1-carboxyvinyltransferase of Lactiplantibacillus plantarum (strain ATCC BAA-793 / NCIMB 8826 / WCFS1) (Lactobacillus plantarum).